A 358-amino-acid chain; its full sequence is Low-specificity L-threonine aldolase 1 (358 aa).

K207 is modified (N6-(pyridoxal phosphate)lysine).

This sequence belongs to the threonine aldolase family. The cofactor is pyridoxal 5'-phosphate. In terms of tissue distribution, expressed in root tips, seedlings, carpels and seeds.

It catalyses the reaction L-threonine = acetaldehyde + glycine. The catalysed reaction is L-allo-threonine = acetaldehyde + glycine. The protein operates within amino-acid degradation; L-threonine degradation via aldolase pathway; acetaldehyde and glycine from L-threonine: step 1/1. Its function is as follows. Threonine aldolase involved in threonine degradation to glycine. May play a role in the removal of L-allo-threonine. This is Low-specificity L-threonine aldolase 1 from Arabidopsis thaliana (Mouse-ear cress).